An 87-amino-acid chain; its full sequence is Non-structural protein NS3 (87 aa).

Its subcellular location is the host nucleus. Functionally, plays a role in viral DNA replication. This Mustela (ADV) protein is Non-structural protein NS3.